Reading from the N-terminus, the 442-residue chain is Proline--tRNA ligase (442 aa).

This sequence belongs to the class-II aminoacyl-tRNA synthetase family. ProS type 2 subfamily. In terms of assembly, homodimer.

The protein resides in the cytoplasm. It catalyses the reaction tRNA(Pro) + L-proline + ATP = L-prolyl-tRNA(Pro) + AMP + diphosphate. Functionally, catalyzes the attachment of proline to tRNA(Pro) in a two-step reaction: proline is first activated by ATP to form Pro-AMP and then transferred to the acceptor end of tRNA(Pro). The chain is Proline--tRNA ligase from Chelativorans sp. (strain BNC1).